Consider the following 235-residue polypeptide: Cytochrome c oxidase subunit 2 (235 aa).

Residues 1 to 14 lie on the Mitochondrial intermembrane side of the membrane; that stretch reads MPYPMQLGFQDATS. The helical transmembrane segment at 15–45 threads the bilayer; that stretch reads PIMEELMYFHDHTLMIVFLISSLVLYIIILM. Residues 46 to 59 lie on the Mitochondrial matrix side of the membrane; that stretch reads LTTKLTHTSTMDAQ. The helical transmembrane segment at 60–87 threads the bilayer; it reads EVETIWTILPAVILILIALPSLRILYMM. Residues 88–235 are Mitochondrial intermembrane-facing; that stretch reads DEIYNPYLTV…MQSFLSYLYI (148 aa). Cu cation is bound by residues His161, Cys196, Glu198, Cys200, His204, and Met207. Glu198 is a binding site for Mg(2+). Tyr218 carries the phosphotyrosine modification.

It belongs to the cytochrome c oxidase subunit 2 family. As to quaternary structure, component of the cytochrome c oxidase (complex IV, CIV), a multisubunit enzyme composed of 14 subunits. The complex is composed of a catalytic core of 3 subunits MT-CO1, MT-CO2 and MT-CO3, encoded in the mitochondrial DNA, and 11 supernumerary subunits COX4I, COX5A, COX5B, COX6A, COX6B, COX6C, COX7A, COX7B, COX7C, COX8 and NDUFA4, which are encoded in the nuclear genome. The complex exists as a monomer or a dimer and forms supercomplexes (SCs) in the inner mitochondrial membrane with NADH-ubiquinone oxidoreductase (complex I, CI) and ubiquinol-cytochrome c oxidoreductase (cytochrome b-c1 complex, complex III, CIII), resulting in different assemblies (supercomplex SCI(1)III(2)IV(1) and megacomplex MCI(2)III(2)IV(2)). Found in a complex with TMEM177, COA6, COX18, COX20, SCO1 and SCO2. Interacts with TMEM177 in a COX20-dependent manner. Interacts with COX20. Interacts with COX16. The cofactor is Cu cation.

The protein localises to the mitochondrion inner membrane. The catalysed reaction is 4 Fe(II)-[cytochrome c] + O2 + 8 H(+)(in) = 4 Fe(III)-[cytochrome c] + 2 H2O + 4 H(+)(out). Functionally, component of the cytochrome c oxidase, the last enzyme in the mitochondrial electron transport chain which drives oxidative phosphorylation. The respiratory chain contains 3 multisubunit complexes succinate dehydrogenase (complex II, CII), ubiquinol-cytochrome c oxidoreductase (cytochrome b-c1 complex, complex III, CIII) and cytochrome c oxidase (complex IV, CIV), that cooperate to transfer electrons derived from NADH and succinate to molecular oxygen, creating an electrochemical gradient over the inner membrane that drives transmembrane transport and the ATP synthase. Cytochrome c oxidase is the component of the respiratory chain that catalyzes the reduction of oxygen to water. Electrons originating from reduced cytochrome c in the intermembrane space (IMS) are transferred via the dinuclear copper A center (CU(A)) of subunit 2 and heme A of subunit 1 to the active site in subunit 1, a binuclear center (BNC) formed by heme A3 and copper B (CU(B)). The BNC reduces molecular oxygen to 2 water molecules using 4 electrons from cytochrome c in the IMS and 4 protons from the mitochondrial matrix. The polypeptide is Cytochrome c oxidase subunit 2 (MT-CO2) (Didelphis virginiana (North American opossum)).